Consider the following 483-residue polypeptide: Essential nuclear protein 1 (483 aa).

4 disordered regions span residues 1-21 (MARA…LKDL), 33-55 (KKKL…GYID), 67-123 (KEQQ…EGDY), and 171-200 (ESQV…GLKS). Residues 96-123 (YDDEDEDEDEDEEAFGEDISDFEPEGDY) are compositionally biased toward acidic residues. S172 bears the Phosphoserine; by ATM or ATR mark. Residues 174–183 (VEDMQDDEPL) are compositionally biased toward acidic residues. Residues 185-198 (NEQNTSRGNISSGL) show a composition bias toward polar residues. Phosphoserine is present on residues S190 and S404.

This sequence belongs to the bystin family.

The protein resides in the cytoplasm. Its subcellular location is the nucleus. It is found in the nucleolus. In terms of biological role, required for normal export of the pre-40S particles from the nucleus to the cytoplasm. Its subcellular location and association with pre-40S subunit shifts from mixed cytoplasm/nucleus to all nuclear in RPS19 disruptions, suggesting it acts after the ribosomal protein. In Saccharomyces cerevisiae (strain ATCC 204508 / S288c) (Baker's yeast), this protein is Essential nuclear protein 1 (ENP1).